A 236-amino-acid chain; its full sequence is 28 kDa antigen (236 aa).

The N-terminal stretch at 1–22 is a signal peptide; the sequence is MPNRRRCKLSTAISTVATLAIA. The tract at residues 76-105 is disordered; it reads PVPSLTGTDDPGNGLRTPGLTSPDLTNQEL. Over residues 94–105 the composition is skewed to polar residues; the sequence is GLTSPDLTNQEL.

It to M.tuberculosis ERP.

In Mycobacterium leprae (strain TN), this protein is 28 kDa antigen.